Reading from the N-terminus, the 310-residue chain is Methionyl-tRNA formyltransferase (310 aa).

Residue 110–113 (SVLP) coordinates (6S)-5,6,7,8-tetrahydrofolate. The tract at residues 283 to 310 (TVQPPGKKSMNAADWARGARAEDIRRAR) is disordered. Positions 299 to 310 (RGARAEDIRRAR) are enriched in basic and acidic residues.

It belongs to the Fmt family.

It carries out the reaction L-methionyl-tRNA(fMet) + (6R)-10-formyltetrahydrofolate = N-formyl-L-methionyl-tRNA(fMet) + (6S)-5,6,7,8-tetrahydrofolate + H(+). In terms of biological role, attaches a formyl group to the free amino group of methionyl-tRNA(fMet). The formyl group appears to play a dual role in the initiator identity of N-formylmethionyl-tRNA by promoting its recognition by IF2 and preventing the misappropriation of this tRNA by the elongation apparatus. The chain is Methionyl-tRNA formyltransferase from Mycolicibacterium gilvum (strain PYR-GCK) (Mycobacterium gilvum (strain PYR-GCK)).